A 132-amino-acid chain; its full sequence is RuBisCO chaperone RbcX (132 aa).

The segment at 110–132 (HLSLSNPSPESEQQTISDTDWDH) is disordered. The segment covering 111 to 132 (LSLSNPSPESEQQTISDTDWDH) has biased composition (polar residues).

It belongs to the RbcX family. In terms of assembly, homodimer. Interacts with the exposed C-terminal peptide of RbcL via its central cleft, contacts a second RbcL monomer via its peripheral polar surface. RbcX and Raf1 can bind simultaneously to RbcL.

It localises to the carboxysome. The protein localises to the cytoplasm. Its function is as follows. An RbcL-specific chaperone. The central cleft of the RbcX homodimer (RbcX2) binds the C-terminus of an RbcL monomer, stabilizing the C-terminus and probably preventing its reassociation with chaperonin GroEL-ES. At the same time the peripheral region of RbcX2 binds a second RbcL monomer, bridging the RbcL homodimers in the correct orientation. The RbcX2(2)-bound RbcL dimers then assemble into the RbcL8 core (RbcL8-(RbcX2)8). RbcS binding triggers the release of RbcX2. When rbcL-rbcX-rbcS or rbcL-rbcS were overexpressed in E.coli no change in reconstituted RuBisCO activity was observed, which suggests RbcX plays no role in RuBisCO assembly in this system. However in PubMed:8472962 E.coli chaperones groL and groS were also overexpressed, which may compensate for lack of rbcX. The protein is RuBisCO chaperone RbcX of Nostoc sp. (strain PCC 7120 / SAG 25.82 / UTEX 2576).